We begin with the raw amino-acid sequence, 717 residues long: MQKFTFFVSCAKGIELLLKDELERLGISSQEKLAGVEFEGSIKDAYKVCIYSYLASQVMLKVATDKVINQQDLYEFISSINWMDYFAVDKTFKIIISGKHYDFNNTMFVSQKTKDAIVDQFRNVTNQRPNIDTENPDNVIKLHLHKQFVNVFLCLNIDSLHKRSYRQFQGQAPLKESLAAAILIKAGWLEELKKHQPILIDPMCGSGTILIEAALMAKNIAPVLLNKEFKIFNSKFHNQELWDNLLEIAKNSQKVTNAIICGFDIDNNVLDKAQRNIYQAGVEDVVTVKRQDIRDLENEFESEGLIVTNPPYGERLYGDQLDELLDIFNGFGDRLSQDFYGWKVAVLTSFADSIKEMQLRTTERNKFYNGAIETILYQFEINEHAKFKHETQLEKNIRIAEASAQKSDEHIDFANKLKKNLKSLKPWLKQTGLECYRLYDADIPTFAVAVDVYSEHIFLQEYRADATIDQNIAKQRFYQAIYQIHKTLDIKYENIHTRVRQRQKGKEQYQKENDKNKFHIINEFDAKFYVNFDDYLDTGIFLDHRKIRQLVAKAAKNKTLLNLFSYTCTASVHAALKGAKTTSVDMSNTYLEWGKNNFTLNNIDAKKHSFIQADCISWLKTNKDKFDVIFLDPPTFSNSKRMDDILDIQRDHELLINLAMDSLKKDGILYFSNNYRRFKMSPQILEKFNCENIDKICLSRDFLSNKNIHNCWEIKYK.

The THUMP domain occupies 44–155 (DAYKVCIYSY…KQFVNVFLCL (112 aa)).

The protein belongs to the methyltransferase superfamily. RlmKL family.

It localises to the cytoplasm. It catalyses the reaction guanosine(2445) in 23S rRNA + S-adenosyl-L-methionine = N(2)-methylguanosine(2445) in 23S rRNA + S-adenosyl-L-homocysteine + H(+). The catalysed reaction is guanosine(2069) in 23S rRNA + S-adenosyl-L-methionine = N(2)-methylguanosine(2069) in 23S rRNA + S-adenosyl-L-homocysteine + H(+). Specifically methylates the guanine in position 2445 (m2G2445) and the guanine in position 2069 (m7G2069) of 23S rRNA. This is Ribosomal RNA large subunit methyltransferase K/L from Francisella tularensis subsp. tularensis (strain WY96-3418).